The following is a 111-amino-acid chain: ATP-dependent Clp protease adapter protein ClpS (111 aa).

It belongs to the ClpS family. Binds to the N-terminal domain of the chaperone ClpA.

Functionally, involved in the modulation of the specificity of the ClpAP-mediated ATP-dependent protein degradation. The polypeptide is ATP-dependent Clp protease adapter protein ClpS (Legionella pneumophila (strain Corby)).